Here is a 425-residue protein sequence, read N- to C-terminus: Tumor necrosis factor receptor superfamily member 16 (425 aa).

A signal peptide spans 1–29 (MRRAGAACSAMDRLRLLLLLILGVSSGGA). The Extracellular portion of the chain corresponds to 30–253 (KETCSTGLYT…VTRGTTDNLI (224 aa)). 4 TNFR-Cys repeats span residues 32–65 (TCSTGLYTHSGECCKACNLGEGVAQPCGANQTVC), 67–108 (PCLD…DAVC), 109–147 (RCAYGYYQDEETGHCEACSVCEVGSGLVFSCQDKQNTVC), and 149–189 (ECPE…DAEC). Disulfide bonds link C33–C44, C45–C58, C48–C65, C68–C84, C87–C100, C90–C108, C110–C123, C126–C139, C129–C147, C150–C165, C168–C181, and C171–C189. N-linked (GlcNAc...) asparagine glycosylation is found at N61 and N71. A disordered region spans residues 193–225 (PGRWIPRSTPPEGSDSTAPSTQEPEVPPEQDLV). Over residues 206–215 (SDSTAPSTQE) the composition is skewed to polar residues. Residues 254-274 (PVYCSILAAVVVGLVAYIAFK) form a helical membrane-spanning segment. Over 275 to 425 (RWNSCKQNKQ…CSESTATSPV (151 aa)) the chain is Cytoplasmic. 2 stretches are compositionally biased toward polar residues: residues 282–292 (NKQGANSRPVN) and 306–327 (SGISVDSQSLHDQQTHTQTASG). Residues 282 to 332 (NKQGANSRPVNQTPPPEGEKLHSDSGISVDSQSLHDQQTHTQTASGQALKG) are disordered. Phosphoserine is present on S312. Positions 327-342 (GQALKGDGNLYSSLPL) are mediates interaction with KIDINS220. Residues 354-419 (GDTWRHLAGE…DIVESLCSES (66 aa)) enclose the Death domain.

Homodimer; disulfide-linked. Heterodimer with SORCS2. The extracellular domains of the heterodimer bind NGF. The cytoplasmic region of the heterodimer binds TRIO. NGF binding mediates dissociation of TRIO from the receptor complex. Interacts with RTN4R. Interacts with TRAF2, TRAF4 and TRAF6. Interacts with PTPN13 and RANBP9. Interacts through TRAF6 with SQSTM1 which bridges NGFR to NTRK1. Interacts with BEX1. Interacts with BEX3. Interacts with KIDINS220 and NTRK1. Can form a ternary complex with NTRK1 and KIDINS220 and this complex is affected by the expression levels of KIDINS220. An increase in KIDINS220 expression leads to a decreased association of NGFR and NTRK1. Interacts (via death domain) with RAB31. Interacts with NTRK2; may regulate the ligand specificity of the NTRK2 receptor. Interacts with LINGO1. Interacts with NRADD. Interacts with MAGED1; the interaction antagonizes the association NGFR:NTRK1. Interacts (via death domain) with ARHGDIA and RIPK2. Interacts with BFAR. In terms of processing, subject to intramembrane proteolytic cleavage by the gamma-secretase complex, giving rise to an intracellular fragment that is rapidly degraded via the proteasome. N- and O-glycosylated. Post-translationally, phosphorylated on serine residues.

The protein resides in the cell membrane. It is found in the cytoplasm. The protein localises to the perikaryon. It localises to the cell projection. Its subcellular location is the growth cone. The protein resides in the dendritic spine. Functionally, low affinity receptor which can bind to NGF, BDNF, NTF3, and NTF4. Forms a heterodimeric receptor with SORCS2 that binds the precursor forms of NGF, BDNF and NTF3 with high affinity, and has much lower affinity for mature NGF and BDNF. In response to proNGF binding, the heterodimeric receptor with SORCS2 activates a signaling cascade that leads to decreased Rac activity, reorganization of the actin cytoskeleton and neuronal growth cone collapse. Plays an important role in differentiation and survival of specific neuronal populations during development. Can mediate cell survival as well as cell death of neural cells. Plays a role in the inactivation of RHOA. Plays a role in the regulation of the translocation of GLUT4 to the cell surface in adipocytes and skeletal muscle cells in response to insulin, probably by regulating RAB31 activity, and thereby contributes to the regulation of insulin-dependent glucose uptake. Necessary for the circadian oscillation of the clock genes BMAL1, PER1, PER2 and NR1D1 in the suprachiasmatic nucleus (SCN) of the brain and in liver and of the genes involved in glucose and lipid metabolism in the liver. The chain is Tumor necrosis factor receptor superfamily member 16 (Ngfr) from Rattus norvegicus (Rat).